A 558-amino-acid polypeptide reads, in one-letter code: Formate--tetrahydrofolate ligase (558 aa).

An ATP-binding site is contributed by 67-74 (TPAGEGKT).

This sequence belongs to the formate--tetrahydrofolate ligase family.

The catalysed reaction is (6S)-5,6,7,8-tetrahydrofolate + formate + ATP = (6R)-10-formyltetrahydrofolate + ADP + phosphate. It functions in the pathway one-carbon metabolism; tetrahydrofolate interconversion. The protein is Formate--tetrahydrofolate ligase of Sphingobium sp. (strain NBRC 103272 / SYK-6).